Here is a 123-residue protein sequence, read N- to C-terminus: UPF0102 protein Psyr_4114 (123 aa).

Belongs to the UPF0102 family.

The protein is UPF0102 protein Psyr_4114 of Pseudomonas syringae pv. syringae (strain B728a).